The chain runs to 394 residues: ATP phosphoribosyltransferase regulatory subunit (394 aa).

It belongs to the class-II aminoacyl-tRNA synthetase family. HisZ subfamily. As to quaternary structure, heteromultimer composed of HisG and HisZ subunits.

It localises to the cytoplasm. The protein operates within amino-acid biosynthesis; L-histidine biosynthesis; L-histidine from 5-phospho-alpha-D-ribose 1-diphosphate: step 1/9. Its function is as follows. Required for the first step of histidine biosynthesis. May allow the feedback regulation of ATP phosphoribosyltransferase activity by histidine. The protein is ATP phosphoribosyltransferase regulatory subunit of Saccharophagus degradans (strain 2-40 / ATCC 43961 / DSM 17024).